The primary structure comprises 474 residues: ATP synthase subunit beta (474 aa).

152 to 159 (GGAGVGKT) contacts ATP.

The protein belongs to the ATPase alpha/beta chains family. As to quaternary structure, F-type ATPases have 2 components, CF(1) - the catalytic core - and CF(0) - the membrane proton channel. CF(1) has five subunits: alpha(3), beta(3), gamma(1), delta(1), epsilon(1). CF(0) has three main subunits: a(1), b(2) and c(9-12). The alpha and beta chains form an alternating ring which encloses part of the gamma chain. CF(1) is attached to CF(0) by a central stalk formed by the gamma and epsilon chains, while a peripheral stalk is formed by the delta and b chains.

The protein localises to the cell inner membrane. It catalyses the reaction ATP + H2O + 4 H(+)(in) = ADP + phosphate + 5 H(+)(out). Functionally, produces ATP from ADP in the presence of a proton gradient across the membrane. The catalytic sites are hosted primarily by the beta subunits. The chain is ATP synthase subunit beta from Magnetococcus marinus (strain ATCC BAA-1437 / JCM 17883 / MC-1).